A 221-amino-acid chain; its full sequence is Penicillin-binding protein activator LpoB (221 aa).

Residues 1–20 (MLNRMYRYALLATVALALSG) form the signal peptide. Residue C21 is the site of N-palmitoyl cysteine attachment. Residue C21 is the site of S-diacylglycerol cysteine attachment. Residues 29–82 (PAPVEEAQPGTQQPTQPVPPPTQPVPTVPSVPSIPAQPGPIEHQPENATPEPKA) form a disordered region. Over residues 44 to 57 (QPVPPPTQPVPTVP) the composition is skewed to pro residues.

Belongs to the LpoB family. In terms of assembly, interacts with PBP1b.

Its subcellular location is the cell outer membrane. In terms of biological role, regulator of peptidoglycan synthesis that is essential for the function of penicillin-binding protein 1B (PBP1b). The protein is Penicillin-binding protein activator LpoB of Cronobacter turicensis (strain DSM 18703 / CCUG 55852 / LMG 23827 / z3032).